A 456-amino-acid polypeptide reads, in one-letter code: Iroquois-class homeodomain protein irx-2 (456 aa).

A DNA-binding region (homeobox; TALE-type) is located at residues 110–172 (DPAYRKNATR…NARRRLKKEN (63 aa)). Disordered stretches follow at residues 172-214 (NKMT…AEDE), 246-320 (CESG…PASK), and 434-456 (RPTN…QPYP). Basic and acidic residues-rich tracts occupy residues 192-205 (GERV…KAQD) and 246-256 (CESGSESKEKY). Over residues 257–269 (DDDEDEEEGDEED) the composition is skewed to acidic residues. The segment covering 291-318 (NHQQDGSPRNSNKTSLDNGMSPSSQTPA) has biased composition (polar residues).

The protein belongs to the TALE/IRO homeobox family. Expressed in the neural plate in overlapping patterns with other irx members, which all share an anterior border of expression. Also expressed in the placodes. Broadly expressed in the tailbud rhombencephalon (hindbrain). Outside the nervous system and at tailbud stages, expressed in the developing otic vesicle, branchial arches, prospective heart region and pronephros.

Its subcellular location is the nucleus. In terms of biological role, acts partially redundantly with other irx members in neural patterning. Required for formation of the posterior forebrain, midbrain, hindbrain, and to a lesser extent, spinal cord. Acts early in neural plate development to induce expression of some but not all proneural genes, and specify a neural precursor state. Also up-regulates repressors that prevent neuronal differentiation. Patterns the neuroectoderm in both the anterior/posterior and dorsal/ventral axes. Probably dispensable for pronephric kidney development. The polypeptide is Iroquois-class homeodomain protein irx-2 (Xenopus tropicalis (Western clawed frog)).